The primary structure comprises 236 residues: Glucosamine-6-phosphate deaminase (236 aa).

Catalysis depends on Asp-62, which acts as the Proton acceptor; for enolization step. Catalysis depends on Asn-128, which acts as the For ring-opening step. Catalysis depends on His-130, which acts as the Proton acceptor; for ring-opening step. The For ring-opening step role is filled by Glu-135.

This sequence belongs to the glucosamine/galactosamine-6-phosphate isomerase family. NagB subfamily.

It catalyses the reaction alpha-D-glucosamine 6-phosphate + H2O = beta-D-fructose 6-phosphate + NH4(+). It functions in the pathway amino-sugar metabolism; N-acetylneuraminate degradation; D-fructose 6-phosphate from N-acetylneuraminate: step 5/5. Its function is as follows. Catalyzes the reversible isomerization-deamination of glucosamine 6-phosphate (GlcN6P) to form fructose 6-phosphate (Fru6P) and ammonium ion. In Oenococcus oeni (strain ATCC BAA-331 / PSU-1), this protein is Glucosamine-6-phosphate deaminase.